Here is a 902-residue protein sequence, read N- to C-terminus: Aconitate hydratase A (902 aa).

The [4Fe-4S] cluster site is built by C441, C507, and C510.

Belongs to the aconitase/IPM isomerase family. As to quaternary structure, monomer. [4Fe-4S] cluster serves as cofactor.

It carries out the reaction citrate = D-threo-isocitrate. The enzyme catalyses (2S,3R)-3-hydroxybutane-1,2,3-tricarboxylate = 2-methyl-cis-aconitate + H2O. It participates in carbohydrate metabolism; tricarboxylic acid cycle; isocitrate from oxaloacetate: step 2/2. The protein operates within organic acid metabolism; propanoate degradation. Its function is as follows. Involved in the catabolism of short chain fatty acids (SCFA) via the tricarboxylic acid (TCA)(acetyl degradation route) and probably the 2-methylcitrate cycle I (propionate degradation route). Catalyzes the reversible isomerization of citrate to isocitrate via cis-aconitate. Also able to catalyze the hydration of cis-homoaconitate to yield (R)-homocitrate, but with a lower efficiency. Could catalyze the hydration of 2-methyl-cis-aconitate to yield (2R,3S)-2-methylisocitrate. The apo form of AcnA functions as a RNA-binding regulatory protein. In Thermus thermophilus (strain ATCC 27634 / DSM 579 / HB8), this protein is Aconitate hydratase A (acoA).